We begin with the raw amino-acid sequence, 156 residues long: Movement protein P17 (156 aa).

The tract at residues 38-54 is homodimerization; it reads AEDVEEEAIAAQEELEF. The tract at residues 57–156 is RNA-binding; it reads DEAQARHSCL…RAAPKLIKRG (100 aa). S71, S79, S137, and S140 each carry phosphoserine. The interval 106–156 is disordered; it reads ASYFSSSARPLPPPPAPSLMSWTPIAKYHPSSPTSTSSKLRRAAPKLIKRG. A compositionally biased stretch (basic residues) spans 144 to 156; the sequence is KLRRAAPKLIKRG.

This sequence belongs to the polerovirus movement protein family. Homodimer. Post-translationally, expressed as a nonphosphorylated 20kDa form and a phosphorylated 22kDa form. Phosphorylated by a host PKC-related kinase. Serine phosphorylation is required for plamodesma targeting.

It localises to the host cell junction. Its subcellular location is the host plasmodesma. The protein resides in the host chloroplast envelope. It is found in the host Golgi apparatus. The protein localises to the host mitochondrion outer membrane. In terms of biological role, together with movement protein P3a, facilitates long-distance movement of virions in host. Transports viral genome to neighboring plant cells directly through plasmosdesmata, without any budding. The movement protein allows efficient cell to cell propagation, by bypassing the host cell wall barrier. Binds ssRNA. In Solanum tuberosum (Potato), this protein is Movement protein P17.